The primary structure comprises 1034 residues: Translation initiation factor IF-2 (1034 aa).

2 disordered regions span residues alanine 118 to glutamate 140 and glutamate 154 to alanine 446. Composition is skewed to low complexity over residues threonine 162–proline 178 and proline 212–serine 228. Basic and acidic residues predominate over residues aspartate 304–glutamate 315. Positions proline 535–glutamate 702 constitute a tr-type G domain. Residues glycine 544–threonine 551 form a G1 region. Residue glycine 544–threonine 551 participates in GTP binding. The tract at residues glycine 569–histidine 573 is G2. Positions aspartate 590–glycine 593 are G3. GTP-binding positions include aspartate 590–histidine 594 and asparagine 644–aspartate 647. Residues asparagine 644–aspartate 647 form a G4 region. Residues serine 680–lysine 682 form a G5 region.

This sequence belongs to the TRAFAC class translation factor GTPase superfamily. Classic translation factor GTPase family. IF-2 subfamily.

It localises to the cytoplasm. In terms of biological role, one of the essential components for the initiation of protein synthesis. Protects formylmethionyl-tRNA from spontaneous hydrolysis and promotes its binding to the 30S ribosomal subunits. Also involved in the hydrolysis of GTP during the formation of the 70S ribosomal complex. The protein is Translation initiation factor IF-2 of Bordetella avium (strain 197N).